Consider the following 629-residue polypeptide: MASEKILGVDLGTTNSAFAVMEGSDPEIITNEEGDRTTPSIVAHDDGELLVGKPAKNQAVQNPDQTIASIKRHMGEEDYTVALGDDEYTPEEISARILQKIKRDAEEYLGQDVEKAVITVPAYFNDRQRQATKDAGEIAGFDVERIVNEPTAASMAYGLDEDRDQTVLVYDLGGGTFDVSILDLGGGVYEVAATNGDNDLGGDDWDHAIIDHLADNFENEHGIDLREDRQALQRLTEAAEEAKIELSSRKETTVNLPFVTATDSGPVHLEQDITRATFESITEDLIERTVGPTEQALEDAGLSKSDIDDVILVGGSTRMPQVQAQVEDLVGQEPKKNVNPDEAVALGAAVQGGVLSGEVDDIVLVDVTPLSLGIEVKGGLFERLIEKNTAIPTTASKVFTTAADNQTSVQIRVFQGEREIASENELLGDFHLTGIPPAPAGTPQIEVTFEIDADGIVNVEAEDQGSGNAESITIEGGAGLSDEQIDEMQEDAEAHAEEDEQRRRRIEARNEAETAIQRAESLLEENEELVDEDLEADVNDAIDDVQAVLDEDEPEIDALETATEELSDTLQEIGKQAYQQQQDAQAGAAGGAGGMGGMGGMADGPGGAADADGDDEEYVDADFEDVDEE.

The span at 576–587 shows a compositional bias: low complexity; that stretch reads QAYQQQQDAQAG. Residues 576-629 are disordered; it reads QAYQQQQDAQAGAAGGAGGMGGMGGMADGPGGAADADGDDEEYVDADFEDVDEE. Positions 588-607 are enriched in gly residues; the sequence is AAGGAGGMGGMGGMADGPGG. Acidic residues predominate over residues 611-629; that stretch reads ADGDDEEYVDADFEDVDEE.

Belongs to the heat shock protein 70 family.

Its function is as follows. Acts as a chaperone. The polypeptide is Chaperone protein DnaK (Halobacterium salinarum (strain ATCC 29341 / DSM 671 / R1)).